The following is a 62-amino-acid chain: Mastoparan-AF (62 aa).

The first 25 residues, 1–25, serve as a signal peptide directing secretion; sequence MKNTILILFTAFIALLGFFGMSAEA. 4 AXPX repeats span residues 25–28, 29–32, 33–36, and 43–46; these read ADPI and ADPE. Residues 26 to 47 constitute a propeptide that is removed on maturation; that stretch reads DPIADPIADPISGPNAEADPEA. Position 61 is a phenylalanine amide (F61).

This sequence belongs to the MCD family. Mastoparan subfamily. In terms of tissue distribution, expressed by the venom gland.

The protein resides in the secreted. Its subcellular location is the target cell membrane. Its function is as follows. Antimicrobial and mast cell degranulating peptide. Has broad spectrum antibacterial activity against both Gram-positive and Gram-negative bacteria (S.aureus MIC=16-32 ug/ml, S.xylosus MIC=1.5 ug/ml, S.alactolyticus MIC=8 ug/ml, C.koseri MIC=4 ug/ml, E.coli MIC=4-32 ug/ml, K.pneumoniae MIC=32 ug/ml, P.aerugiosa MIC=96 ug/ml, S.choleraesuis MIC=16 ug/ml, S.typhimurium MIC=32 ug/ml, V.parahamelytics MIC=16 ug/ml). Is also active on multi-antibiotic resistant hemolytic E.coli O157:H7. Acts by affecting membrane permeability. On E.coli O157:H7, acts through multiple membrane disruption patterns, including large perforations (full opening) at apical ends (hollow tubes), vesicle budding, forming dents, and membrane corrugation and invagination leading to irregular pits or pores. Exerts 40% lower membrane permeabilization activities on E.coli O157:H7 than on the non-pathogen E.coli BL21. Shows little hemolytic activities on sheep, chicken and human erythrocytes, but with a higher activity on chicken erythrocytes. Its mast cell degranulation activity may be related to the activation of G-protein coupled receptors in mast cells as well as interaction with other proteins located in cell endosomal membranes in the mast cells. This Vespa affinis (Lesser banded hornet) protein is Mastoparan-AF.